A 332-amino-acid chain; its full sequence is MYYKYIFQNGYLKHIKIFMTVFMELLRLLNHINLYNIIHHEELFENGIDNETFFYLFKIGFLGDIIDIINHVVSNTKTITVDFMDKILVVYKNKLIQYAIDDICINSACYDKIYKILIDKSLETDNLNLFNFIVKELDTVFMDVDESKLTFRQKNRLDSIKNKHSYNSTRINSIIKICLSKHSPVKNCPKIFSQLITDLGGVMEMIDHDFYKIFYRGIINYAEIVCENLIHTSPELIDDLLLKARRMEMFQLLVDHGANYKKIYKTTPDEKQKKSLKRFINNLKDKEYLEDIDDIDDSDESDDSDDSEDSDSFGDSDSSGNSEDSEDSDNSE.

2 stretches are compositionally biased toward acidic residues: residues 290 to 314 (EDID…DSFG) and 323 to 332 (EDSEDSDNSE). The interval 290–332 (EDIDDIDDSDESDDSDDSEDSDSFGDSDSSGNSEDSEDSDNSE) is disordered.

The protein belongs to the mimivirus L17x/L18x family.

This is an uncharacterized protein from Acanthamoeba polyphaga mimivirus (APMV).